The primary structure comprises 507 residues: MDSQKEALQRIISTLANKSDEIQNFIDTLNHTLKGVQENSSNILSELDEEFDSLYSILDDVKESMISTIKQEQVRKSQELQSQLSQCNNALENSEELLEFATRSLDIKEPEEFSKAARQIKDRVTMASAFRLSLKPKVSDNMTHLMVDFSQERQMLQTLKFLPVPKAPEIDPVECLVADNSVTVAWRMPEEDNKIDHFIMEYRKTNFDGLPRVKDERCWEVIDNIKGTEYTLSGLKFDSKYMNFRVRACNKAVAGDYSDPVTLETRALNFSLDNSSSHLNLKVEDSCVEWDPTGGKGQESKIKGKENKGSVHVTSLKKHTSGTPSPKRTSVGSRPPAVRGSRDRFTGESYTVLGDTAIENGQHYWEVKAQKDCKSYSVGVAYKTLGKFDQLGKTNTSWCVHVNSWLQNTFAAKHNNKVKALDVPVPEKIGVFCDFDGGQLSFYDAHSKQLLYSFKTKFTQPVVPGFMVWCGGLSLSTGMQVPSAVRTLQKSENGMTGSTSSLNNVTQ.

Positions 70 to 109 form a coiled coil; the sequence is KQEQVRKSQELQSQLSQCNNALENSEELLEFATRSLDIKE. The COS domain occupies 105 to 162; that stretch reads LDIKEPEEFSKAARQIKDRVTMASAFRLSLKPKVSDNMTHLMVDFSQERQMLQTLKFL. The Fibronectin type-III domain maps to 164-268; the sequence is VPKAPEIDPV…DPVTLETRAL (105 aa). A B30.2/SPRY domain is found at 291–484; the sequence is DPTGGKGQES…LSTGMQVPSA (194 aa). Positions 292–345 are disordered; the sequence is PTGGKGQESKIKGKENKGSVHVTSLKKHTSGTPSPKRTSVGSRPPAVRGSRDRF. Positions 298–309 are enriched in basic and acidic residues; that stretch reads QESKIKGKENKG. Positions 321 to 332 are enriched in polar residues; sequence SGTPSPKRTSVG. S498 and S501 each carry phosphoserine.

The chain is FSD1-like protein (Fsd1l) from Mus musculus (Mouse).